A 317-amino-acid chain; its full sequence is Acetyl-coenzyme A carboxylase carboxyl transferase subunit alpha (317 aa).

In terms of domain architecture, CoA carboxyltransferase C-terminal spans 40–293; sequence LEVRVREAIV…GDVIASALAE (254 aa).

Belongs to the AccA family. Acetyl-CoA carboxylase is a heterohexamer composed of biotin carboxyl carrier protein (AccB), biotin carboxylase (AccC) and two subunits each of ACCase subunit alpha (AccA) and ACCase subunit beta (AccD).

It localises to the cytoplasm. It carries out the reaction N(6)-carboxybiotinyl-L-lysyl-[protein] + acetyl-CoA = N(6)-biotinyl-L-lysyl-[protein] + malonyl-CoA. It functions in the pathway lipid metabolism; malonyl-CoA biosynthesis; malonyl-CoA from acetyl-CoA: step 1/1. Functionally, component of the acetyl coenzyme A carboxylase (ACC) complex. First, biotin carboxylase catalyzes the carboxylation of biotin on its carrier protein (BCCP) and then the CO(2) group is transferred by the carboxyltransferase to acetyl-CoA to form malonyl-CoA. This is Acetyl-coenzyme A carboxylase carboxyl transferase subunit alpha from Rhizobium johnstonii (strain DSM 114642 / LMG 32736 / 3841) (Rhizobium leguminosarum bv. viciae).